A 387-amino-acid chain; its full sequence is Putative purine permease 15 (387 aa).

10 consecutive transmembrane segments (helical) span residues 44-64, 84-104, 122-142, 150-169, 179-199, 210-230, 252-272, 306-326, 329-349, and 354-374; these read WVTI…ARLL, TLLQ…HFLI, LAIT…FSDV, VFTL…SKYY, FISL…FSAG, YGII…LCII, FVVV…ILVA, VAWQ…SAVF, VISV…YNTH, and VFRG…IYII.

The protein belongs to the purine permeases (TC 2.A.7.14) family.

The protein resides in the membrane. The chain is Putative purine permease 15 (PUP15) from Arabidopsis thaliana (Mouse-ear cress).